The chain runs to 232 residues: Ornithine carbamoyltransferase (232 aa).

Residues Gln15, Arg39, and 66–69 (HPTQ) contribute to the carbamoyl phosphate site. Residues Asn99, Asp163, and 167–168 (SM) each bind L-ornithine. Carbamoyl phosphate-binding positions include 204-207 (HCLP) and Thr232.

It belongs to the aspartate/ornithine carbamoyltransferase superfamily. OTCase family.

The protein localises to the cytoplasm. It catalyses the reaction carbamoyl phosphate + L-ornithine = L-citrulline + phosphate + H(+). The protein operates within amino-acid biosynthesis; L-arginine biosynthesis; L-arginine from L-ornithine and carbamoyl phosphate: step 1/3. In terms of biological role, reversibly catalyzes the transfer of the carbamoyl group from carbamoyl phosphate (CP) to the N(epsilon) atom of ornithine (ORN) to produce L-citrulline. The polypeptide is Ornithine carbamoyltransferase (argF) (Neisseria subflava).